The chain runs to 197 residues: Dephospho-CoA kinase (197 aa).

The DPCK domain maps to 2–197; it reads IIGLTGGIAS…GAIKDLANLV (196 aa). Residue 10-15 participates in ATP binding; it reads ASGKST.

The protein belongs to the CoaE family.

It localises to the cytoplasm. The enzyme catalyses 3'-dephospho-CoA + ATP = ADP + CoA + H(+). Its pathway is cofactor biosynthesis; coenzyme A biosynthesis; CoA from (R)-pantothenate: step 5/5. Catalyzes the phosphorylation of the 3'-hydroxyl group of dephosphocoenzyme A to form coenzyme A. The chain is Dephospho-CoA kinase from Streptococcus thermophilus (strain CNRZ 1066).